Consider the following 179-residue polypeptide: MLRFKELYQQKIIENLQKKFSYKNKHEIPQIKKIVINMGVGEATANSKVINNAVNDLTLISGQKPVVTLARKSIATFKLRENMKIGCKVTLRKDRMYDFLERLVIVALPRVKEFRGFSYKSFDGKGNFTFGLKEQIVFPEINYDKIDTIRGMDITIVTSAKTDQESKFLLSGFNLPFYN.

Belongs to the universal ribosomal protein uL5 family. Part of the 50S ribosomal subunit; part of the 5S rRNA/L5/L18/L25 subcomplex. Contacts the 5S rRNA and the P site tRNA. Forms a bridge to the 30S subunit in the 70S ribosome.

This is one of the proteins that bind and probably mediate the attachment of the 5S RNA into the large ribosomal subunit, where it forms part of the central protuberance. In the 70S ribosome it contacts protein S13 of the 30S subunit (bridge B1b), connecting the 2 subunits; this bridge is implicated in subunit movement. Contacts the P site tRNA; the 5S rRNA and some of its associated proteins might help stabilize positioning of ribosome-bound tRNAs. The polypeptide is Large ribosomal subunit protein uL5 (Rickettsia rickettsii (strain Iowa)).